The following is a 252-amino-acid chain: Type IV pilus assembly protein PilF (252 aa).

The first 17 residues, 1 to 17, serve as a signal peptide directing secretion; it reads MTVRAALVFLLAVGLTG. The N-palmitoyl cysteine moiety is linked to residue cysteine 18. A lipid anchor (S-diacylglycerol cysteine) is attached at cysteine 18. TPR repeat units lie at residues 32–67, 84–101, 104–133, 139–171, 174–203, and 208–235; these read GRDEARDAYIQLGLGYLQRGNTEQAKVPLRKALEID, EMEPKLADEEYRKALASD, NARVLNNYGGFLYEQKRYEEAYQRLLEASQ, ERSRVFENLGLVSLQMKKPAQAKEYFEKSLRLN, QPSVALEMADLLYKEREYVPARQYYDLFAQ, and NARSLLLGIRLAKVFEDRDTAASYGLQL.

In terms of assembly, interacts with PilQ; this interaction is essential for assemby of PilQ into secretins.

The protein localises to the cell outer membrane. Its function is as follows. Essential component of the type IV pilus (T4P) that plays a role in surface and host cell adhesion, colonization, biofilm maturation, virulence, and twitching, a form of surface-associated motility facilitated by cycles of extension, adhesion, and retraction of T4P fibers. Plays an essential role in the outer membrane localization and assembly of PilQ into secretins which are dodecamers of PilQ. The chain is Type IV pilus assembly protein PilF (pilF) from Pseudomonas aeruginosa (strain ATCC 15692 / DSM 22644 / CIP 104116 / JCM 14847 / LMG 12228 / 1C / PRS 101 / PAO1).